Reading from the N-terminus, the 395-residue chain is Putative nickel insertion protein (395 aa).

The protein belongs to the LarC family.

The sequence is that of Putative nickel insertion protein from Methanopyrus kandleri (strain AV19 / DSM 6324 / JCM 9639 / NBRC 100938).